Here is a 47-residue protein sequence, read N- to C-terminus: Potassium channel toxin alpha-KTx 7.1 (47 aa).

Residues 1–12 (RGSVDYKDDDDK) form the signal peptide. 3 disulfides stabilise this stretch: Cys-16–Cys-37, Cys-22–Cys-42, and Cys-26–Cys-44.

It belongs to the short scorpion toxin superfamily. Potassium channel inhibitor family. Alpha-KTx 07 subfamily. Expressed by the venom gland.

The protein localises to the secreted. Its function is as follows. Potent inhibitor of the A-type voltage-gated potassium channels. Most potent inhibitor of Kv1.2/KCNA2 channels. Reversibly block the Shaker B potassium-channels (Kv1.1 sub-family). The polypeptide is Potassium channel toxin alpha-KTx 7.1 (PTX-1) (Pandinus imperator (Emperor scorpion)).